The chain runs to 906 residues: Catenin alpha-1 (906 aa).

Thr2 bears the N-acetylthreonine mark. An involved in homodimerization region spans residues 2–228 (TAVHTGNINF…PILYTASQAC (227 aa)). A Glycyl lysine isopeptide (Lys-Gly) (interchain with G-Cter in SUMO2) cross-link involves residue Lys57. The segment at 97–148 (VRKQCDLMKSAAGEFADDPCSSVKRGNMVRAARALLSAVTRLLILADMADVY) is interaction with JUP and CTNNB1. A phosphoserine mark is found at Ser264, Ser268, Ser295, and Ser297. The interval 325-394 (TRDDRRERIV…AVMDHVSDSF (70 aa)) is interaction with alpha-actinin. Thr634 bears the Phosphothreonine mark. Ser641 bears the Phosphoserine mark. The residue at position 645 (Thr645) is a Phosphothreonine. Ser652 and Ser655 each carry phosphoserine. Thr658 bears the Phosphothreonine mark. A Glycyl lysine isopeptide (Lys-Gly) (interchain with G-Cter in SUMO2) cross-link involves residue Lys797. Ser851 bears the Phosphoserine mark. Residues 864–880 (PEKKPLVKREKQDETQT) are compositionally biased toward basic and acidic residues. The segment at 864 to 894 (PEKKPLVKREKQDETQTKIKRASQKKHVNPV) is disordered. Positions 881–891 (KIKRASQKKHV) are enriched in basic residues.

It belongs to the vinculin/alpha-catenin family. As to quaternary structure, monomer and homodimer; the monomer preferentially binds to CTNNB1 and the homodimer to actin. Component of an cadherin:catenin adhesion complex composed of at least of CDH26, beta-catenin/CTNNB1, alpha-catenin/CTNNA1 and p120 catenin/CTNND1. Possible component of an E-cadherin/ catenin adhesion complex together with E-cadherin/CDH1 and beta-catenin/CTNNB1 or gamma-catenin/JUP; the complex is located to adherens junctions. The stable association of CTNNA1 is controversial as CTNNA1 was shown not to bind to F-actin when assembled in the complex. Alternatively, the CTNNA1-containing complex may be linked to F-actin by other proteins such as LIMA1. Binds AFDN and F-actin. Interacts with ARHGAP21. Interacts with AJUBA. Interacts with LIMA1. Interacts with vinculin/VCL. Interacts with TJP2/ZO2 (via N-terminus). Interacts with TJP1/ZO1 (via N-terminus). Post-translationally, sumoylated. In terms of processing, phosphorylation seems to contribute to the strength of cell-cell adhesion rather than to the basic capacity for cell-cell adhesion.

Its subcellular location is the cytoplasm. It is found in the cytoskeleton. The protein resides in the cell junction. The protein localises to the adherens junction. It localises to the cell membrane. Its subcellular location is the nucleus. Associates with the cytoplasmic domain of a variety of cadherins. The association of catenins to cadherins produces a complex which is linked to the actin filament network, and which seems to be of primary importance for cadherins cell-adhesion properties. Can associate with both E- and N-cadherins. Originally believed to be a stable component of E-cadherin/catenin adhesion complexes and to mediate the linkage of cadherins to the actin cytoskeleton at adherens junctions. In contrast, cortical actin was found to be much more dynamic than E-cadherin/catenin complexes and CTNNA1 was shown not to bind to F-actin when assembled in the complex suggesting a different linkage between actin and adherens junctions components. The homodimeric form may regulate actin filament assembly and inhibit actin branching by competing with the Arp2/3 complex for binding to actin filaments. Involved in the regulation of WWTR1/TAZ, YAP1 and TGFB1-dependent SMAD2 and SMAD3 nuclear accumulation. May play a crucial role in cell differentiation. The chain is Catenin alpha-1 from Bos taurus (Bovine).